The sequence spans 851 residues: Protein BCK2 (851 aa).

Basic residues predominate over residues 1 to 10 (MPKNSHHHRS). Disordered regions lie at residues 1 to 91 (MPKN…RKKS), 233 to 271 (EVVP…MNTK), 315 to 355 (SLSL…LPEE), 466 to 504 (FLDG…YITT), and 698 to 722 (HASR…PNNV). The segment covering 11-23 (SSVNSTKSRSTES) has biased composition (low complexity). Over residues 37 to 66 (ASGSTQASPDRNSSTGSCSTPVLPTMNVMS) the composition is skewed to polar residues. Positions 71 to 81 (VLLEDPRDNHT) are enriched in basic and acidic residues. Polar residues-rich tracts occupy residues 254 to 271 (SETN…MNTK), 334 to 349 (SPRT…SQSK), 489 to 504 (ISDA…YITT), and 702 to 722 (SESN…PNNV). Ser-334 is subject to Phosphoserine. Phosphoserine occurs at positions 757 and 761.

Functionally, dosage dependent suppressor of PKC1 deletion and MPK1 deletion. Involved in cell lysis. The sequence is that of Protein BCK2 (BCK2) from Saccharomyces cerevisiae (strain ATCC 204508 / S288c) (Baker's yeast).